Consider the following 354-residue polypeptide: uncharacterized protein (354 aa).

This is an uncharacterized protein from Rickettsia prowazekii (strain Madrid E).